The primary structure comprises 600 residues: MKIDTIRNFSIIAHIDHGKSTLADRLLEYTGALTEREMQDQFLDKMDLERERGITIKAQTVRLTYRADDGNDYILNLIDTPGHVDFTYEVSRSLAACEGALLVVDASQGVEAQTLANVYLAIDNNLEVFPVLNKIDLPAAEPERVKHEIEEIIGLDAHDAVMASAKEGIGTREILEEIVKKIPPPEGDPAAPLKALLFDSWYDQYQGVIILVRVIDGTVKKGDKIQLVSTGRSYEALKVGVFAPVMREVPQLAAGEVGFLIAGIKDVADAKIGDTVTHALKPCVTPLGGFKEVKPMVFSGLYPIDTAQYEQLRDALAKLKLNDSSFSFEPETSLALGFGFRCGFLGLLHMEIIQERLEREFNLDLITTAPTVVYKVHRIKGDVITIESANQLPPLQEIDYIEEPFILASIHTPNEFVGGILSLCEEKRGVQREIKYLTPTRVMIIYELPLNEVVLDFYDRLKSITKGYASLDYEHLNYRRSDLVRMNILINGEAVDALSLIIHRDKAYYRGRDLVSKMKELIPRQMFEVVIQAAIGAKVIARETVKALRKDVLAKCYGGDITRKRKLLEKQKEGKKRMKNVGNVELPQEAFLAILKVEEK.

Positions 4–186 constitute a tr-type G domain; sequence DTIRNFSIIA…EIVKKIPPPE (183 aa). Residues 16 to 21 and 133 to 136 contribute to the GTP site; these read DHGKST and NKID.

This sequence belongs to the TRAFAC class translation factor GTPase superfamily. Classic translation factor GTPase family. LepA subfamily.

It localises to the cell inner membrane. It carries out the reaction GTP + H2O = GDP + phosphate + H(+). Its function is as follows. Required for accurate and efficient protein synthesis under certain stress conditions. May act as a fidelity factor of the translation reaction, by catalyzing a one-codon backward translocation of tRNAs on improperly translocated ribosomes. Back-translocation proceeds from a post-translocation (POST) complex to a pre-translocation (PRE) complex, thus giving elongation factor G a second chance to translocate the tRNAs correctly. Binds to ribosomes in a GTP-dependent manner. The protein is Elongation factor 4 of Geobacter sulfurreducens (strain ATCC 51573 / DSM 12127 / PCA).